A 597-amino-acid polypeptide reads, in one-letter code: Dynein intermediate chain 3, ciliary (597 aa).

7 WD repeats span residues 159 to 210, 213 to 253, 260 to 301, 314 to 354, 361 to 400, 404 to 444, and 449 to 488; these read EIKR…KPEF, KPVS…QAVE, SHHD…EPTE, ENAQ…PPEK, EHIGPVYSLQRNPFFPKNFLTVGDWTARIWSEDIRDSSIM, YHMS…KDPT, and VSDDALHSLRVQDQGRLIATGSNSGTTTLLELSSGLCTMQ. Disordered stretches follow at residues 512 to 546 and 562 to 597; these read RQRELRLKRQGASAQGQDDDEEGGPDEEEDLVAAA and AAQQAKLSEQDNKIIEEAEENNGSEKKDTENGEKEG. Acidic residues predominate over residues 528 to 542; it reads QDDDEEGGPDEEEDL. Over residues 584 to 597 the composition is skewed to basic and acidic residues; that stretch reads GSEKKDTENGEKEG.

Belongs to the dynein intermediate chain family. Consists of at least two heavy chains (alpha and beta), three intermediate chains and several light chains.

It is found in the cytoplasm. It localises to the cytoskeleton. The protein resides in the cilium axoneme. In terms of biological role, may play a role in the regulation of dynein heavy chain activity. The chain is Dynein intermediate chain 3, ciliary from Heliocidaris crassispina (Sea urchin).